The sequence spans 175 residues: DELTA-stichotoxin-She4b (175 aa).

The segment at 1 to 10 (ALAGTIIAGA) is plays an important role in the hemolytic activity. The N-terminal region stretch occupies residues 9–28 (GASLTFQVLDKVLEELGKVS). Residues S52, V85, S103, P105, Y131, Y135, and Y136 each coordinate phosphocholine. Positions 103–118 (SVPFDYNWYSNWWDVK) are trp-rich region, which is important for the binding to lipid membrane. The Cell attachment site, crucial for protein stability signature appears at 141 to 143 (RGD).

In terms of assembly, octamer or nonamer in membranes. Monomer in the soluble state. Originally described as forming tetramer in the presence of a lipidic interface. In terms of tissue distribution, expressed in tentacles and mesenteric filaments.

The protein localises to the secreted. The protein resides in the nematocyst. It is found in the target cell membrane. Functionally, pore-forming protein that forms cations-selective hydrophilic pores of around 1 nm and causes cardiac stimulation and cytolysis. Pore formation is a multi-step process that involves specific recognition of membrane sphingomyelin (but neither cholesterol nor phosphatidylcholine) using aromatic rich region and adjacent phosphocholine (POC) binding site, firm binding to the membrane (mainly driven by hydrophobic interactions) accompanied by the transfer of the N-terminal region to the lipid-water interface and finally pore formation after oligomerization of monomers. Cytolytic effects include red blood cells hemolysis, platelet aggregation and lysis, cytotoxic and cytostatic effects on fibroblasts. Lethality in mammals has been ascribed to severe vasospasm of coronary vessels, cardiac arrhythmia, and inotropic effects. The sequence is that of DELTA-stichotoxin-She4b from Stichodactyla helianthus (Sun anemone).